We begin with the raw amino-acid sequence, 652 residues long: Large subunit GTPase 1 homolog (652 aa).

At serine 93 the chain carries Phosphoserine. The region spanning 164-438 (WRQLWRVIER…LCDCPGLVMP (275 aa)) is the CP-type G domain. Residue 212–215 (NKAD) participates in GTP binding. Serine 252 is modified (phosphoserine). The interval 288–347 (LGEAASSEEDESEYEDCQEEEEDWQTCLEDSSSSDEEACGQDCKEGHTVDSEAQGRNTPQ) is disordered. The span at 293 to 311 (SSEEDESEYEDCQEEEEDW) shows a compositional bias: acidic residues. Residues 387–394 (GYPNVGKS) and 431–434 (DCPG) each bind GTP. The segment at 625–652 (RGAGKPWKKHGNRNKKEKSRRLYKHLDM) is disordered. A compositionally biased stretch (basic residues) spans 630 to 652 (PWKKHGNRNKKEKSRRLYKHLDM).

This sequence belongs to the TRAFAC class YlqF/YawG GTPase family. LSG1 subfamily.

Its subcellular location is the cytoplasm. The protein localises to the endoplasmic reticulum. It is found in the nucleus. The protein resides in the cajal body. The enzyme catalyses GTP + H2O = GDP + phosphate + H(+). Functions as a GTPase. May act by mediating the release of NMD3 from the 60S ribosomal subunit after export into the cytoplasm during the 60S ribosomal subunit maturation. The polypeptide is Large subunit GTPase 1 homolog (Bos taurus (Bovine)).